Consider the following 551-residue polypeptide: Putative transport protein HI_0035 (551 aa).

The next 5 helical transmembrane spans lie at 4–24 (IAIT…IGHW), 28–48 (GVGL…HFTN), 65–85 (FGLI…FFSS), 95–115 (AFAI…HKIA), and 157–177 (VSYA…MWLI). 2 RCK C-terminal domains span residues 191–275 (RFNA…IIGH) and 277–360 (VDAP…VIGN). The next 6 membrane-spanning stretches (helical) occupy residues 370-390 (MLPV…PFYI), 402-424 (AGGP…LYWF), 438-458 (IVLF…DTLV), 463-483 (LEWM…VGTI), 492-512 (YLTI…LAFA), and 529-549 (VYPL…VLLW).

Belongs to the AAE transporter (TC 2.A.81) family. YidE subfamily.

It localises to the cell membrane. The protein is Putative transport protein HI_0035 of Haemophilus influenzae (strain ATCC 51907 / DSM 11121 / KW20 / Rd).